We begin with the raw amino-acid sequence, 134 residues long: ATP synthase epsilon chain (134 aa).

The protein belongs to the ATPase epsilon chain family. F-type ATPases have 2 components, CF(1) - the catalytic core - and CF(0) - the membrane proton channel. CF(1) has five subunits: alpha(3), beta(3), gamma(1), delta(1), epsilon(1). CF(0) has three main subunits: a, b and c.

It localises to the cellular thylakoid membrane. Its function is as follows. Produces ATP from ADP in the presence of a proton gradient across the membrane. This is ATP synthase epsilon chain from Prochlorococcus marinus (strain AS9601).